The chain runs to 1719 residues: Cilia- and flagella-associated protein 43 (1719 aa).

The interval 94–120 (VREEGAGGGADKPSGSGAVSGKQQSSG) is disordered. WD repeat units follow at residues 122–165 (SVVL…GRCR), 174–214 (SSTS…EKAV), 226–263 (PAGA…PLQL), 308–345 (TSGA…AAAI), 413–452 (CHVG…LLGR), and 513–552 (LHSA…GRVR). A disordered region spans residues 569–596 (TWPRSDGGSGAASGHAQAGPVSTTSAEG). WD repeat units lie at residues 697–736 (AHAR…LAAQ) and 749–788 (ITAG…AVAN). The tract at residues 1022–1045 (RAKQEAARKADEDAAKRSAKDNAG) is disordered. One copy of the WD 9 repeat lies at 1073–1114 (PKPAWLVALGVEPDAVNPKLITEEQNRELKEWQAKEKSLQEE). Disordered regions lie at residues 1220 to 1269 (MPGG…AAAA), 1277 to 1296 (ATAA…GAAG), and 1325 to 1372 (TLNP…AAAA). A compositionally biased stretch (gly residues) spans 1221-1233 (PGGGAIGAAGGHQ). Residues 1257–1269 (ASLAHSPSGAAAA) show a composition bias toward low complexity. A compositionally biased stretch (low complexity) spans 1344–1358 (SSALHPSHSHASVHG). Coiled coils occupy residues 1524–1609 (AAQW…RSAQ) and 1651–1679 (HKKL…RLRT). The segment at 1685–1719 (ESGAVAGMPSPPRRLPPDIKLLAGSPSSSSVAGRT) is disordered. Over residues 1709-1719 (SPSSSSVAGRT) the composition is skewed to polar residues.

The protein belongs to the CFAP43 family.

Its subcellular location is the cell projection. It localises to the cilium. The protein resides in the flagellum. It is found in the cytoplasm. The protein localises to the cytoskeleton. Its subcellular location is the flagellum axoneme. Its function is as follows. Flagellar protein involved in flagellum axoneme organization and function. This Chlamydomonas reinhardtii (Chlamydomonas smithii) protein is Cilia- and flagella-associated protein 43.